Consider the following 162-residue polypeptide: NADH-quinone oxidoreductase subunit I (162 aa).

2 4Fe-4S ferredoxin-type domains span residues 53-83 and 93-122; these read LRRYPNGEERCIACKLCEAVCPALAITIESE and TRYDIDLIKCIFCGFCEEACPVDAIVETRV. C63, C66, C69, C73, C102, C105, C108, and C112 together coordinate [4Fe-4S] cluster.

Belongs to the complex I 23 kDa subunit family. As to quaternary structure, NDH-1 is composed of 14 different subunits. Subunits NuoA, H, J, K, L, M, N constitute the membrane sector of the complex. [4Fe-4S] cluster is required as a cofactor.

The protein resides in the cell inner membrane. The enzyme catalyses a quinone + NADH + 5 H(+)(in) = a quinol + NAD(+) + 4 H(+)(out). NDH-1 shuttles electrons from NADH, via FMN and iron-sulfur (Fe-S) centers, to quinones in the respiratory chain. The immediate electron acceptor for the enzyme in this species is believed to be ubiquinone. Couples the redox reaction to proton translocation (for every two electrons transferred, four hydrogen ions are translocated across the cytoplasmic membrane), and thus conserves the redox energy in a proton gradient. This Nitrosomonas eutropha (strain DSM 101675 / C91 / Nm57) protein is NADH-quinone oxidoreductase subunit I.